The following is a 460-amino-acid chain: Kynureninase (460 aa).

Pyridoxal 5'-phosphate contacts are provided by residues leucine 116, threonine 117, 144–147 (FPSD), serine 199, aspartate 228, histidine 231, and tyrosine 253. Lysine 254 is subject to N6-(pyridoxal phosphate)lysine. The pyridoxal 5'-phosphate site is built by tryptophan 288 and asparagine 316.

This sequence belongs to the kynureninase family. As to quaternary structure, homodimer. The cofactor is pyridoxal 5'-phosphate.

The protein resides in the cytoplasm. It carries out the reaction L-kynurenine + H2O = anthranilate + L-alanine + H(+). The enzyme catalyses 3-hydroxy-L-kynurenine + H2O = 3-hydroxyanthranilate + L-alanine + H(+). It functions in the pathway amino-acid degradation; L-kynurenine degradation; L-alanine and anthranilate from L-kynurenine: step 1/1. The protein operates within cofactor biosynthesis; NAD(+) biosynthesis; quinolinate from L-kynurenine: step 2/3. Functionally, catalyzes the cleavage of L-kynurenine (L-Kyn) and L-3-hydroxykynurenine (L-3OHKyn) into anthranilic acid (AA) and 3-hydroxyanthranilic acid (3-OHAA), respectively. This chain is Kynureninase, found in Debaryomyces hansenii (strain ATCC 36239 / CBS 767 / BCRC 21394 / JCM 1990 / NBRC 0083 / IGC 2968) (Yeast).